Here is a 373-residue protein sequence, read N- to C-terminus: Asporin (373 aa).

Positions 1–15 (MKEYVMLLLLAVCSA) are cleaved as a signal peptide. Positions 16-32 (KPFFSPSHTALKNMMLK) are excised as a propeptide. The O-linked (GalNAc...) serine glycan is linked to Ser48. Residues 59–95 (FFPFDLFPTCPFGCQCYSRVVHCSDLGLTSVPNNIPF) form the LRRNT domain. 2 disulfide bridges follow: Cys68/Cys74 and Cys72/Cys81. 11 LRR repeats span residues 96–117 (DTRM…DFKG), 120–141 (SLYA…TFLT), 144–166 (KLRR…PKSL), 167–186 (AELR…TFKG), 189–212 (ALHV…AFEG), 235–255 (TLLE…EDLK), 259–280 (ELQR…TFAN), 283–305 (RVRE…QELK), 306–327 (YLQI…DFCP), 328–349 (TVPK…PMKY), and 350–373 (WEIQ…NVGK). Positions 159 to 205 (PLNLPKSLAELRIHDNKVKKIQKDTFKGMNALHVLEMSANPLENNGI) are interaction with TGFB1. Asn275 carries an N-linked (GlcNAc...) asparagine glycan. An intrachain disulfide couples Cys326 to Cys359.

Belongs to the small leucine-rich proteoglycan (SLRP) family. SLRP class I subfamily. In terms of assembly, interacts with type I collagen. DCN can inhibit collagen binding. Interacts with TGFB1, TGFB2 and TGFB3. DCN, BGN, and FMOD inhibit binding to TGFB1. Interacts with BMP2. Interacts in vitro with type II collagen. Higher expression in heart, also detected in kidney, stomach, testes, and skin but only weakly in lung, skeletal muscle, small intestine, and thymus. Expressed specifically and predominantly in the periodontal ligament (PDL). During tooth development, strong expression is seen in the dental follicle, which is the progenitor tissue that forms cementum, alveolar bone, and the PDL. Expressed in the perichondria of the maxilla, mandible, vertebrae, and long bones. Predominantly expressed in the perichondrium/periosteum of long bones (at protein level).

It is found in the secreted. The protein resides in the extracellular space. Its subcellular location is the extracellular matrix. In terms of biological role, binds calcium and plays a role in osteoblast-driven collagen biomineralization activity. Critical regulator of TGF-beta in articular cartilage and plays an essential role in cartilage homeostasis and osteoarthritis (OA) pathogenesis. Negatively regulates chondrogenesis in the articular cartilage by blocking the TGF-beta/receptor interaction on the cell surface and inhibiting the canonical TGF-beta/Smad signal. Negatively regulates periodontal ligament (PDL) differentiation and mineralization to ensure that the PDL is not ossified and to maintain homeostasis of the tooth-supporting system. Inhibits BMP2-induced cytodifferentiation of PDL cells by preventing its binding to BMPR1B/BMP type-1B receptor, resulting in inhibition of BMP-dependent activation of SMAD proteins. Inhibits the interaction between TGFB1 and TGF-beta receptor type II in the presence of heparin/heparan sulfate in vitro. This is Asporin (Aspn) from Mus musculus (Mouse).